Consider the following 198-residue polypeptide: Recombination protein RecR (198 aa).

The segment at 56-71 (CGVCGNVDTSNPCGIC) adopts a C4-type zinc-finger fold. The region spanning 79-174 (RSICVVEEVA…RVTQLAHGLP (96 aa)) is the Toprim domain.

It belongs to the RecR family.

Its function is as follows. May play a role in DNA repair. It seems to be involved in an RecBC-independent recombinational process of DNA repair. It may act with RecF and RecO. The sequence is that of Recombination protein RecR from Novosphingobium aromaticivorans (strain ATCC 700278 / DSM 12444 / CCUG 56034 / CIP 105152 / NBRC 16084 / F199).